We begin with the raw amino-acid sequence, 182 residues long: UPF0316 protein BCG9842_B1857 (182 aa).

The next 3 membrane-spanning stretches (helical) occupy residues 6–26 (LIFVLQIIYVPILTIRTILLV), 32–52 (SAAGVGLLEGAIYIVSLGIVF), and 58–78 (WMNIVAYVIGFSTGLLLGGYI).

Belongs to the UPF0316 family.

It localises to the cell membrane. This chain is UPF0316 protein BCG9842_B1857, found in Bacillus cereus (strain G9842).